A 392-amino-acid chain; its full sequence is Caveolae-associated protein 1 (392 aa).

Residue Met1 is modified to N-acetylmethionine. Basic and acidic residues predominate over residues 1–10 (MEDVTLHIVE). The segment at 1-45 (MEDVTLHIVERPYSGYPDASSEGPEPTPGEARATEEPSGTGSDEL) is disordered. The interval 1 to 100 (MEDVTLHIVE…IQGELSKLGK (100 aa)) is required for homotrimerization and for interaction with CAVIN2 and CAVIN3. Ser21 and Ser38 each carry phosphoserine. Thr40 is modified (phosphothreonine). A phosphoserine mark is found at Ser42 and Ser48. The nuclear export signal stretch occupies residues 54–64 (VLVLSLLDKII). The tract at residues 55–77 (LVLSLLDKIIGAVDQIQLTQAQL) is leucine-zipper 1. Lys118 participates in a covalent cross-link: Glycyl lysine isopeptide (Lys-Gly) (interchain with G-Cter in SUMO2). Residue Ser120 is modified to Phosphoserine. Lys124 is covalently cross-linked (Glycyl lysine isopeptide (Lys-Gly) (interchain with G-Cter in SUMO2)). The tract at residues 138–154 (KKLEVNEAELLRRRNFK) is nuclear localization signal. Tyr158 bears the Phosphotyrosine mark. Lys163 is covalently cross-linked (Glycyl lysine isopeptide (Lys-Gly) (interchain with G-Cter in SUMO1); alternate). Lys163 participates in a covalent cross-link: Glycyl lysine isopeptide (Lys-Gly) (interchain with G-Cter in SUMO2); alternate. A Glycyl lysine isopeptide (Lys-Gly) (interchain with G-Cter in SUMO2) cross-link involves residue Lys167. The leucine-zipper 2 stretch occupies residues 168 to 188 (LSVSKSLKESEALPEKEGDEL). Phosphoserine occurs at positions 169 and 171. Residue Lys172 forms a Glycyl lysine isopeptide (Lys-Gly) (interchain with G-Cter in SUMO2) linkage. Ser173 and Ser177 each carry phosphoserine. The segment covering 173-183 (SLKESEALPEK) has biased composition (basic and acidic residues). Residues 173-198 (SLKESEALPEKEGDELGEGERPEEDA) form a disordered region. Over residues 184–198 (EGDELGEGERPEEDA) the composition is skewed to acidic residues. Residues 201–284 (IELSSDEAVE…RMNKLGTRLV (84 aa)) adopt a coiled-coil conformation. Ser204 and Ser205 each carry phosphoserine. The segment at 235-251 (KKAFSKEKMEKTKVRTR) is nuclear localization signal. The tract at residues 259-299 (LKTKENLEKTRHTLEKRMNKLGTRLVPVERREKLKTSRDKL) is leucine-zipper 3. Position 302 is a phosphoserine (Ser302). The residue at position 304 (Thr304) is a Phosphothreonine. Tyr310 carries the post-translational modification Phosphotyrosine. Lys328 participates in a covalent cross-link: Glycyl lysine isopeptide (Lys-Gly) (interchain with G-Cter in SUMO2). Positions 347 to 367 (GPDDDEVGAERGAETDLLRGS) are disordered. The segment covering 354 to 363 (GAERGAETDL) has biased composition (basic and acidic residues). Residues Ser367, Ser368, Ser381, Ser389, and Ser391 each carry the phosphoserine modification.

The protein belongs to the CAVIN family. As to quaternary structure, component of the CAVIN complex composed of CAVIN1, CAVIN2, CAVIN3 and CAVIN4. Interacts with RNA polymerase I subunit POLR1A/RPA1 and TTF1. Binds the 3' end of pre-rRNA. Interacts with transcription factor ZNF148. Interacts with LIPE in the adipocyte cytoplasm. Interacts with CAV1, CAV3, CAVIN2, CAVIN3 and CAVIN4. Post-translationally, phosphorylated. Present in active and inactive forms. Changes in phosphorylation pattern may alter activity. Phosphorylation at Tyr-158 is essential for its function in the regulation of ribosomal transcriptional activity. Monoubiquitinated. In terms of tissue distribution, expressed in the adipocyte (at protein level). Expressed in all striated and smooth muscles tested including diaphragm, esophageal striated muscle, fibroblast, endocardial endothelium, epicardial mesothelium, intestinal smooth muscle, masseter, soleus muscle, vascular smooth muscle and white gastrocnemius muscle (at protein level). Expressed in the endothelium and perineural sheath (at protein level). Not expressed in hepatocytes.

It is found in the membrane. The protein localises to the caveola. It localises to the cell membrane. The protein resides in the microsome. Its subcellular location is the endoplasmic reticulum. It is found in the cytoplasm. The protein localises to the cytosol. It localises to the mitochondrion. The protein resides in the nucleus. In terms of biological role, plays an important role in caveolae formation and organization. Essential for the formation of caveolae in all tissues. Core component of the CAVIN complex which is essential for recruitment of the complex to the caveolae in presence of calveolin-1 (CAV1). Essential for normal oligomerization of CAV1. Promotes ribosomal transcriptional activity in response to metabolic challenges in the adipocytes and plays an important role in the formation of the ribosomal transcriptional loop. Dissociates transcription complexes paused by DNA-bound TTF1, thereby releasing both RNA polymerase I and pre-RNA from the template. The caveolae biogenesis pathway is required for the secretion of proteins such as GASK1A. In Rattus norvegicus (Rat), this protein is Caveolae-associated protein 1.